A 421-amino-acid polypeptide reads, in one-letter code: Imidazolonepropionase (421 aa).

Fe(3+)-binding residues include His80 and His82. Zn(2+) is bound by residues His80 and His82. Residues Arg89, Tyr152, and His185 each contribute to the 4-imidazolone-5-propanoate site. Residue Tyr152 participates in N-formimidoyl-L-glutamate binding. His249 is a binding site for Fe(3+). His249 serves as a coordination point for Zn(2+). Glu252 lines the 4-imidazolone-5-propanoate pocket. Asp324 lines the Fe(3+) pocket. Residue Asp324 participates in Zn(2+) binding. Residues Asn326 and Gly328 each coordinate N-formimidoyl-L-glutamate. Ser329 serves as a coordination point for 4-imidazolone-5-propanoate.

Belongs to the metallo-dependent hydrolases superfamily. HutI family. Zn(2+) serves as cofactor. The cofactor is Fe(3+).

The protein resides in the cytoplasm. It carries out the reaction 4-imidazolone-5-propanoate + H2O = N-formimidoyl-L-glutamate. Its pathway is amino-acid degradation; L-histidine degradation into L-glutamate; N-formimidoyl-L-glutamate from L-histidine: step 3/3. Functionally, catalyzes the hydrolytic cleavage of the carbon-nitrogen bond in imidazolone-5-propanoate to yield N-formimidoyl-L-glutamate. It is the third step in the universal histidine degradation pathway. This Bacillus velezensis (strain DSM 23117 / BGSC 10A6 / LMG 26770 / FZB42) (Bacillus amyloliquefaciens subsp. plantarum) protein is Imidazolonepropionase.